Reading from the N-terminus, the 47-residue chain is Photosystem II reaction center protein K (47 aa).

The propeptide occupies 1 to 10 (MALINFDLLA). Residues 26-46 (LPLIPLFFFLLVFVWQAAVGF) form a helical membrane-spanning segment.

The protein belongs to the PsbK family. As to quaternary structure, PSII is composed of 1 copy each of membrane proteins PsbA, PsbB, PsbC, PsbD, PsbE, PsbF, PsbH, PsbI, PsbJ, PsbK, PsbL, PsbM, PsbT, PsbX, PsbY, Psb30/Ycf12, peripheral proteins PsbO, CyanoQ (PsbQ), PsbU, PsbV and a large number of cofactors. It forms dimeric complexes.

It is found in the cellular thylakoid membrane. Functionally, one of the components of the core complex of photosystem II (PSII). PSII is a light-driven water:plastoquinone oxidoreductase that uses light energy to abstract electrons from H(2)O, generating O(2) and a proton gradient subsequently used for ATP formation. It consists of a core antenna complex that captures photons, and an electron transfer chain that converts photonic excitation into a charge separation. The protein is Photosystem II reaction center protein K of Prochlorococcus marinus (strain NATL1A).